The primary structure comprises 460 residues: Retinoic acid receptor alpha (460 aa).

A modulating region spans residues 1–87; the sequence is MASNSSSCPT…PPPLPRIYKP (87 aa). Residues 46-78 are disordered; that stretch reads HQLPVSGYSTPSPATVETQSTSSEEIVPSPPSP. A compositionally biased stretch (polar residues) spans 52 to 69; that stretch reads GYSTPSPATVETQSTSSE. 2 consecutive NR C4-type zinc fingers follow at residues 88-108 and 124-148; these read CFVC…CEGC and CHRD…LQKC. The nuclear receptor DNA-binding region spans 88–153; sequence CFVCQDKSSG…RLQKCFEVGM (66 aa). Positions 154–182 are hinge; that stretch reads SKESVRNDRNKKKKDVPKTECSESYIVTP. One can recognise an NR LBD domain in the interval 183-417; that stretch reads EVEELIEKVR…PLIQEMLENS (235 aa). The 9aaTAD signature appears at 408–416; the sequence is PLIQEMLEN. The tract at residues 418 to 460 is disordered; the sequence is EGMDTLGGQPGGPRTGGLGPPPGSCSPSLSPSSTRSSPATHSP. The span at 425–435 shows a compositional bias: gly residues; that stretch reads GQPGGPRTGGL. The segment covering 442-460 has biased composition (low complexity); it reads CSPSLSPSSTRSSPATHSP.

This sequence belongs to the nuclear hormone receptor family. NR1 subfamily. In terms of assembly, heterodimer; with an RXR molecule. Binds DNA preferentially as a RAR/RXR heterodimer. As to expression, ubiquitous.

The protein localises to the nucleus. Functionally, receptor for retinoic acid. Retinoic acid receptors bind as heterodimers to their target response elements in response to their ligands, all-trans or 9-cis retinoic acid, and regulate gene expression in various biological processes. The RAR/RXR heterodimers bind to the retinoic acid response elements (RARE) composed of tandem 5'-AGGTCA-3' sites known as DR1-DR5. Required for hindbrain patterning and appears to be required for skin development. This is Retinoic acid receptor alpha (RARA) from Gallus gallus (Chicken).